A 508-amino-acid polypeptide reads, in one-letter code: MATKKTSLTKHPLKILFVSSEVEGFAKTGGLADVAKSLPAALKKMGHDVRIVMPFYQTINGKDNAVAILSTELLVESQPFAVSYQVMQLDEGNVPVYALDAPQYYDRPELYAENNQAYADNGERFTFLSAASLDLCEKLGFQPDVIHCNDWHTGLIPFLLKTRYAESDFFAKSKSVITIHNAVFKGVFNYDQYSLIPELIQRRYINAEMDPSHISMLKAGVAYADKVNAVSPNYASELLTHLGSHGMEADFQNRAKDLYGIINGCDYDDWNPETDVYIKQKFKANKVSLARGKKACRRDLQKQVNLPEVDVPVYGMVCRLTEQKGLHYLIPVLEDFLLNDVQVVIVGTGDPTLASALRDISEQHSDKFAFVETYSNPLAHCVEAGVDFFMMPSEFEPCGLNQMYSLAYGTLPIVRSVGGLKDTVIDYDQTPQVATGFIYDTPTPEALLIKLQRSLLLYCQRPQEFKRLQQNAMACKFNWDESAEQYLDMYLGGEQSLVNEICNDKVDA.

Position 27 (K27) interacts with ADP-alpha-D-glucose.

The protein belongs to the glycosyltransferase 1 family. Bacterial/plant glycogen synthase subfamily.

It catalyses the reaction [(1-&gt;4)-alpha-D-glucosyl](n) + ADP-alpha-D-glucose = [(1-&gt;4)-alpha-D-glucosyl](n+1) + ADP + H(+). It functions in the pathway glycan biosynthesis; glycogen biosynthesis. In terms of biological role, synthesizes alpha-1,4-glucan chains using ADP-glucose. This Photobacterium profundum (strain SS9) protein is Glycogen synthase.